The sequence spans 124 residues: Putative C(50) carotenoid beta-cyclase subunit A (124 aa).

3 helical membrane passes run 1–21 (MIGLSYLLVQVVSFAGILVID), 34–54 (AAALAVTASVALLLTWDVLGV), and 78–98 (FEEVVFLAFLSHLALVCAAGV).

The protein belongs to the lycopene beta-cyclase family. May form a complex with LbtBC.

The protein resides in the cell membrane. The protein operates within carotenoid biosynthesis. Involved in the biosynthesis of C(50) beta-cyclic carotenoids. May have C(50) carotenoid beta-cyclase activity and produce the C(50) beta-cyclic carotenoid C.p.450 from the C(50) carotenoid dihydrobisanhydrobacterioruberin (DH-BABR). In Dietzia sp. (strain CQ4), this protein is Putative C(50) carotenoid beta-cyclase subunit A.